The chain runs to 101 residues: Small ribosomal subunit protein uS14 (101 aa).

Belongs to the universal ribosomal protein uS14 family. Part of the 30S ribosomal subunit. Contacts proteins S3 and S10.

Functionally, binds 16S rRNA, required for the assembly of 30S particles and may also be responsible for determining the conformation of the 16S rRNA at the A site. The sequence is that of Small ribosomal subunit protein uS14 from Opitutus terrae (strain DSM 11246 / JCM 15787 / PB90-1).